Reading from the N-terminus, the 249-residue chain is Small ribosomal subunit protein uS3 (249 aa).

Positions 39 to 108 constitute a KH type-2 domain; the sequence is IRQLINKKLA…TVAVNVAEIP (70 aa). The interval 214–249 is disordered; sequence ETFARPQRRDRDERRPEGGDRPARRRPTARRRTGGE. Residues 220 to 235 are compositionally biased toward basic and acidic residues; it reads QRRDRDERRPEGGDRP. Residues 236-249 show a composition bias toward basic residues; it reads ARRRPTARRRTGGE.

This sequence belongs to the universal ribosomal protein uS3 family. As to quaternary structure, part of the 30S ribosomal subunit. Forms a tight complex with proteins S10 and S14.

Its function is as follows. Binds the lower part of the 30S subunit head. Binds mRNA in the 70S ribosome, positioning it for translation. The polypeptide is Small ribosomal subunit protein uS3 (Deinococcus radiodurans (strain ATCC 13939 / DSM 20539 / JCM 16871 / CCUG 27074 / LMG 4051 / NBRC 15346 / NCIMB 9279 / VKM B-1422 / R1)).